Consider the following 236-residue polypeptide: Rab-like protein 3 (236 aa).

The tract at residues 1-236 (MASLDRVKVL…AGTLKSLHYD (236 aa)) is small GTPase-like. Residues 16 to 21 (GVGKSS), 148 to 150 (KLD), and 179 to 180 (DC) each bind GTP.

Belongs to the small GTPase superfamily. Rab family. Homodimer. Interacts with GPR89; the interaction stabilizes GPR89. Interacts with RAP1GDS1.

Required for KRAS signaling regulation and modulation of cell proliferation. Regulator of KRAS prenylation, and probably prenylation of other small GTPases. Required for lymphocyte development and function. Not required for myeloid cell development. The sequence is that of Rab-like protein 3 (RABL3) from Homo sapiens (Human).